The chain runs to 227 residues: Neuromodulin (227 aa).

A disordered region spans residues M1–A227. 2 S-palmitoyl cysteine lipidation sites follow: C3 and C4. Positions K9–H32 are enriched in basic and acidic residues. Residues A31 to P60 enclose the IQ domain. S41 carries the post-translational modification Phosphoserine; by PHK. Residues E54–D84 show a composition bias toward basic and acidic residues. A compositionally biased stretch (low complexity) spans G85 to P97. A phosphoserine mark is found at S86 and S96. Positions K98–G127 are enriched in basic and acidic residues. Over residues S128–T139 the composition is skewed to low complexity. Residue T138 is modified to Phosphothreonine. S142, S144, and S145 each carry phosphoserine. Residues K146–Q158 show a composition bias toward basic and acidic residues. Residues A159–S193 show a composition bias toward low complexity. T172 carries the post-translational modification Phosphothreonine. 2 positions are modified to phosphoserine; by CK2: S192 and S193. A compositionally biased stretch (basic and acidic residues) spans V202 to E215. Residues G216–A227 show a composition bias toward acidic residues.

It belongs to the neuromodulin family. As to quaternary structure, identified in a complex containing FGFR4, NCAM1, CDH2, PLCG1, FRS2, SRC, SHC1, GAP43 and CTTN. Interacts (via IQ domain) with calmodulin. Binds calmodulin with a greater affinity in the absence of Ca(2+) than in its presence. Phosphorylated. Phosphorylation of this protein by a protein kinase C is specifically correlated with certain forms of synaptic plasticity. Post-translationally, palmitoylated by ZDHHC3. Palmitoylation is regulated by ARF6 and is essential for plasma membrane association and axonal and dendritic filopodia induction. Deacylated by LYPLA2. As to expression, expressed in the hippocampus (at protein level). Expressed in the dorsal root ganglion and the spinal cord (at protein level).

It is found in the cell membrane. The protein localises to the cell projection. It localises to the growth cone membrane. The protein resides in the synapse. Its subcellular location is the filopodium membrane. It is found in the perikaryon. The protein localises to the dendrite. It localises to the axon. The protein resides in the cytoplasm. Functionally, this protein is associated with nerve growth. It is a major component of the motile 'growth cones' that form the tips of elongating axons. Plays a role in axonal and dendritic filopodia induction. This chain is Neuromodulin (Gap43), found in Mus musculus (Mouse).